The following is a 1018-amino-acid chain: Importin-9 (1018 aa).

Residues 35 to 114 (TEKRIKQLEY…RNILPNGLYD (80 aa)) enclose the Importin N-terminal domain. The segment at 921-950 (GKSDEPLTDSEEDGDDEDAPGNPDKPRYIS) is disordered. Residues 926-939 (PLTDSEEDGDDEDA) show a composition bias toward acidic residues.

The protein belongs to the importin beta family.

Its subcellular location is the cytoplasm. The protein resides in the nucleus. Its function is as follows. Nuclear transport receptor that mediates nuclear import of proteins. Serves as receptor for nuclear localization signals (NLS) in cargo substrates. Is thought to mediate docking of the importin/substrate complex to the nuclear pore complex (NPC) through binding to nucleoporin and the complex is subsequently translocated through the pore by an energy requiring, Ran-dependent mechanism. Mediates the import of pre-assembled proteasomes into the nucleus during the late stages of sperm development. In Drosophila melanogaster (Fruit fly), this protein is Importin-9.